The sequence spans 247 residues: Oil body-associated protein 2A (247 aa).

A disordered region spans residues 1–26; the sequence is MASSDERPGAYPARDGSENLPPGDPK.

The protein belongs to the OBAP family.

The chain is Oil body-associated protein 2A from Arabidopsis thaliana (Mouse-ear cress).